The chain runs to 715 residues: Lactococcin transport/processing ATP-binding protein LcnC-like (715 aa).

The 128-residue stretch at 11–138 (QVDEMDCGCA…SEWTGISLFL (128 aa)) folds into the Peptidase C39 domain. Residue Cys-17 is part of the active site. Helical transmembrane passes span 167-187 (VILNIVIASFIVTLINILGSY), 197-217 (IPNALMGTLGIISVGLLLTYI), 237-257 (LAIDVILSYIRHIFQLPMSFF), 282-302 (TILSLFLDLTIVLMTGLILGL), and 307-327 (LFLLVLLAIPLYIVVIIIFTP). One can recognise an ABC transmembrane type-1 domain in the interval 168–450 (ILNIVIASFI…IINLQTKLQK (283 aa)). Positions 482-715 (LNMSEISYQY…NGFYAQLYHN (234 aa)) constitute an ABC transporter domain. 515-522 (GISGSGKS) is an ATP binding site.

It belongs to the ABC transporter superfamily. HlyB family.

The protein resides in the cell membrane. In terms of biological role, involved in the export process of a bacteriocin lactococcin. The polypeptide is Lactococcin transport/processing ATP-binding protein LcnC-like (lcnC) (Lactococcus lactis subsp. lactis (strain IL1403) (Streptococcus lactis)).